The primary structure comprises 384 residues: DNA dC-&gt;dU-editing enzyme APOBEC-3G (384 aa).

An essential for cytoplasmic localization region spans residues 1-60 (MKPHFRNTVERMYRDTFSYNFYNRPILSRRNTVWLCYEVKTKGPSRPPLDAKIFRGQVYS). The region spanning 29-138 (RRNTVWLCYE…PDYQEALRSL (110 aa)) is the CMP/dCMP-type deaminase 1 domain. Thr-32 is modified (phosphothreonine; by PKA). (Microbial infection) Glycyl lysine isopeptide (Lys-Gly) (interchain with G-Cter in ubiquitin) cross-links involve residues Lys-42, Lys-52, and Lys-63. Positions 65, 97, and 100 each coordinate Zn(2+). Residues Lys-150 and Lys-163 each participate in a (Microbial infection) Glycyl lysine isopeptide (Lys-Gly) (interchain with G-Cter in ubiquitin) cross-link. Residues 209 to 336 (EPWVRGRHET…TLAEAGAKIS (128 aa)) are necessary for homooligomerization. The tract at residues 213–215 (RGR) is interaction with DNA. The CMP/dCMP-type deaminase 2 domain maps to 214–328 (GRHETYLCYE…GRCQEGLRTL (115 aa)). Thr-218 bears the Phosphothreonine; by PKA and CAMK2 mark. Lys-249 participates in a covalent cross-link: (Microbial infection) Glycyl lysine isopeptide (Lys-Gly) (interchain with G-Cter in ubiquitin). A Zn(2+)-binding site is contributed by His-257. The active-site Proton donor is Glu-259. Lys-270 participates in a covalent cross-link: (Microbial infection) Glycyl lysine isopeptide (Lys-Gly) (interchain with G-Cter in ubiquitin). Zn(2+)-binding residues include Cys-288 and Cys-291. (Microbial infection) Glycyl lysine isopeptide (Lys-Gly) (interchain with G-Cter in ubiquitin) cross-links involve residues Lys-297, Lys-301, and Lys-303. The interval 313-320 (RIYDDQGR) is interaction with DNA. Lys-334 is covalently cross-linked ((Microbial infection) Glycyl lysine isopeptide (Lys-Gly) (interchain with G-Cter in ubiquitin)).

It belongs to the cytidine and deoxycytidylate deaminase family. As to quaternary structure, homodimer. Homooligomer. Can bind RNA to form ribonucleoprotein complexes of high-molecular-mass (HMM) or low-molecular-mass (LMM). HMM is inactive and heterogeneous in protein composition because of binding nonselectively to cellular RNAs, which in turn are associated with variety of cellular proteins. The LMM form which is enzymatically active has few or no RNAs associated. Its ability to form homooligomer is distinct from its ability to assemble into HMM. Interacts with APOBEC3B, APOBEC3F, MOV10, AGO2, EIF4E, EIF4ENIF1, DCP2 and DDX6 in an RNA-dependent manner. Interacts with AGO1, AGO3 and PKA/PRKACA. (Microbial infection) Interacts with HIV-1 Vif; promoting its ubiquitination by a cullin-5-RING E3 ubiquitin-protein ligase complex (ECS complex) hijacked by the HIV-1 Vif. In terms of assembly, (Microbial infection) Interacts with HIV-1 reverse transcriptase/ribonuclease H. As to quaternary structure, (Microbial infection) Interacts with hepatitis B virus capsid protein. Requires Zn(2+) as cofactor. (Microbial infection) Following infection by HIV-1, ubiquitinated by a cullin-5-RING E3 ubiquitin-protein ligase complex (ECS complex) hijacked by the HIV-1 Vif protein, leading to its degradation. Deubiquitinated by USP49; leading to stabilization. Post-translationally, phosphorylation at Thr-32 reduces its binding to HIV-1 Vif and subsequent ubiquitination and degradation thus promoting its antiviral activity. In terms of tissue distribution, expressed in spleen, testes, ovary and peripheral blood leukocytes and CD4+ lymphocytes. Also expressed in non-permissive peripheral blood mononuclear cells, and several tumor cell lines; no expression detected in permissive lymphoid and non-lymphoid cell lines. Exists only in the LMM form in peripheral blood-derived resting CD4 T-cells and monocytes, both of which are refractory to HIV-1 infection. LMM is converted to a HMM complex when resting CD4 T-cells are activated or when monocytes are induced to differentiate into macrophages. This change correlates with increased susceptibility of these cells to HIV-1 infection.

Its subcellular location is the cytoplasm. It is found in the nucleus. It localises to the P-body. The enzyme catalyses a 2'-deoxycytidine in single-stranded DNA + H2O + H(+) = a 2'-deoxyuridine in single-stranded DNA + NH4(+). (Microbial infection) Antiviral activity is neutralized by the HIV-1 virion infectivity factor (Vif), that prevents its incorporation into progeny virions by both inhibiting its translation and/or by inducing its ubiquitination and subsequent degradation by the 26S proteasome. Can also be neutralized by simian immunodeficiency virus sooty mangabey monkey virus (SIV-sm) and chimpanzee immunodeficiency virus (SIV-cpz) Vif. In terms of biological role, DNA deaminase (cytidine deaminase) which acts as an inhibitor of retrovirus replication and retrotransposon mobility via deaminase-dependent and -independent mechanisms. Exhibits potent antiviral activity against Vif-deficient HIV-1. After the penetration of retroviral nucleocapsids into target cells of infection and the initiation of reverse transcription, it can induce the conversion of cytosine to uracil in the minus-sense single-strand viral DNA, leading to G-to-A hypermutations in the subsequent plus-strand viral DNA. The resultant detrimental levels of mutations in the proviral genome, along with a deamination-independent mechanism that works prior to the proviral integration, together exert efficient antiretroviral effects in infected target cells. Selectively targets single-stranded DNA and does not deaminate double-stranded DNA or single- or double-stranded RNA. Exhibits antiviral activity also against simian immunodeficiency viruses (SIVs), hepatitis B virus (HBV), equine infectious anemia virus (EIAV), xenotropic MuLV-related virus (XMRV) and simian foamy virus (SFV). May inhibit the mobility of LTR and non-LTR retrotransposons. This Homo sapiens (Human) protein is DNA dC-&gt;dU-editing enzyme APOBEC-3G.